We begin with the raw amino-acid sequence, 80 residues long: UPF0248 protein MJ1316 (80 aa).

This sequence belongs to the UPF0248 family.

In Methanocaldococcus jannaschii (strain ATCC 43067 / DSM 2661 / JAL-1 / JCM 10045 / NBRC 100440) (Methanococcus jannaschii), this protein is UPF0248 protein MJ1316.